Reading from the N-terminus, the 223-residue chain is NAD(P)H-hydrate epimerase (223 aa).

One can recognise a YjeF N-terminal domain in the interval 9-209 (MQKIDTYTVN…DIGLLTPPDF (201 aa)). 57–61 (NNGAD) is a binding site for (6S)-NADPHX. 2 residues coordinate K(+): Asn58 and Asp119. Residues 123–129 (GTGLNNL) and Asp152 each bind (6S)-NADPHX. Residue Thr155 participates in K(+) binding.

Belongs to the NnrE/AIBP family. K(+) is required as a cofactor.

It catalyses the reaction (6R)-NADHX = (6S)-NADHX. It carries out the reaction (6R)-NADPHX = (6S)-NADPHX. Its function is as follows. Catalyzes the epimerization of the S- and R-forms of NAD(P)HX, a damaged form of NAD(P)H that is a result of enzymatic or heat-dependent hydration. This is a prerequisite for the S-specific NAD(P)H-hydrate dehydratase to allow the repair of both epimers of NAD(P)HX. The polypeptide is NAD(P)H-hydrate epimerase (Leuconostoc gelidum subsp. gasicomitatum (strain DSM 15947 / CCUG 46042 / CECT 5767 / JCM 12535 / LMG 18811 / NBRC 113245 / TB1-10) (Leuconostoc gasicomitatum)).